We begin with the raw amino-acid sequence, 265 residues long: R-spondin-1 (265 aa).

The first 20 residues, 1–20 (MRLGLCVVALVLSWTHIAVG), serve as a signal peptide directing secretion. FU repeat units follow at residues 34 to 85 (AEGS…GYFD) and 91 to 135 (MNKC…GSTA). 11 disulfides stabilise this stretch: cysteine 40-cysteine 47, cysteine 44-cysteine 53, cysteine 56-cysteine 75, cysteine 79-cysteine 94, cysteine 97-cysteine 105, cysteine 102-cysteine 111, cysteine 114-cysteine 125, cysteine 129-cysteine 142, cysteine 148-cysteine 190, cysteine 159-cysteine 166, and cysteine 199-cysteine 206. A glycan (N-linked (GlcNAc...) asparagine) is linked at asparagine 137. One can recognise a TSP type-1 domain in the interval 147-207 (QCEMSEWSPW…KCTVRRTPCP (61 aa)). Residue tryptophan 153 is glycosylated (C-linked (Man) tryptophan). Residue tryptophan 156 is glycosylated (C-linked (Man) tryptophan; by DPY19L3). Disordered regions lie at residues 173–192 (EERT…TCSD) and 201–265 (VRRT…TWAQ). Positions 245–257 (QQQPQPGTTGPLT) are enriched in low complexity.

The protein belongs to the R-spondin family. As to quaternary structure, interacts with ZNRF3; promoting indirect interaction between ZNRF3 and LGR4 and membrane clearance of ZNRF3. Identified in a complex composed of RNF43, LGR5 and RSPO1. Interacts with the extracellular domain of FZD8 and LRP6. It however does not form a ternary complex with FZD8 and LRP6. Interacts with WNT1. Binds heparin. Interacts with LGR4, LGR5 and LGR6. Interacts (via FU repeats) with KREM1. Post-translationally, C-, and N-glycosylated. N-glycosylation at Asn-137, negatively influences its secretion and enhancing effect on Wnt/beta-catenin signaling. C-mannosylation at Trp-156 by DPY19L3 is required for its secretion an regulates the enhancing activity of Wnt signaling. As to expression, expressed in the dorsal part of the neural tube on 10 and 12 dpc, especially in the boundary region between roof plate and neuroepithelium. This expression is enhanced in the rostral part. Also expressed in other tissues such as truncal region neighboring forelimbs and mesenchymal tissues around the nasal cavity.

It is found in the secreted. The protein localises to the nucleus. Its function is as follows. Activator of the canonical Wnt signaling pathway by acting as a ligand for LGR4-6 receptors. Upon binding to LGR4-6 (LGR4, LGR5 or LGR6), LGR4-6 associate with phosphorylated LRP6 and frizzled receptors that are activated by extracellular Wnt receptors, triggering the canonical Wnt signaling pathway to increase expression of target genes. Also regulates the canonical Wnt/beta-catenin-dependent pathway and non-canonical Wnt signaling by acting as an inhibitor of ZNRF3, an important regulator of the Wnt signaling pathway. Acts as a ligand for frizzled FZD8 and LRP6. May negatively regulate the TGF-beta pathway. Has a essential roles in ovary determination. Regulates Wnt signaling by antagonizing DKK1/KREM1-mediated internalization of LRP6 through an interaction with KREM1. The protein is R-spondin-1 (Rspo1) of Mus musculus (Mouse).